The primary structure comprises 243 residues: Uridylate kinase (243 aa).

An ATP-binding site is contributed by 15–18 (KLSG). The segment at 23 to 28 (GEEGFG) is involved in allosteric activation by GTP. Gly-57 is a binding site for UMP. Positions 58 and 62 each coordinate ATP. UMP contacts are provided by residues Asp-77 and 138–145 (TGNPFFTT). The ATP site is built by Thr-165, Phe-171, and Asp-174.

The protein belongs to the UMP kinase family. In terms of assembly, homohexamer.

The protein localises to the cytoplasm. It catalyses the reaction UMP + ATP = UDP + ADP. It functions in the pathway pyrimidine metabolism; CTP biosynthesis via de novo pathway; UDP from UMP (UMPK route): step 1/1. With respect to regulation, allosterically activated by GTP. Inhibited by UTP. In terms of biological role, catalyzes the reversible phosphorylation of UMP to UDP. This chain is Uridylate kinase, found in Vibrio campbellii (strain ATCC BAA-1116).